Reading from the N-terminus, the 164-residue chain is Nucleotide-binding protein Mfla_1706 (164 aa).

The protein belongs to the YajQ family.

Its function is as follows. Nucleotide-binding protein. This chain is Nucleotide-binding protein Mfla_1706, found in Methylobacillus flagellatus (strain ATCC 51484 / DSM 6875 / VKM B-1610 / KT).